A 119-amino-acid polypeptide reads, in one-letter code: Protein TraH (119 aa).

A disordered region spans residues 1–67; sequence MSNPNEMTDE…ALDESRRPKA (67 aa). A compositionally biased stretch (low complexity) spans 41-54; the sequence is APSAPAEPSHSASP.

Its function is as follows. The initiation process of transfer DNA synthesis requires the interaction of at least three plasmid-specific components (TraH, TraI, and TraJ) at the transfer origin resulting in the assembly of a specialized nucleoprotein complex - the relaxosome. The polypeptide is Protein TraH (traH) (Escherichia coli).